The sequence spans 462 residues: Argininosuccinate lyase (462 aa).

The protein belongs to the lyase 1 family. Argininosuccinate lyase subfamily.

Its subcellular location is the cytoplasm. The enzyme catalyses 2-(N(omega)-L-arginino)succinate = fumarate + L-arginine. It participates in amino-acid biosynthesis; L-arginine biosynthesis; L-arginine from L-ornithine and carbamoyl phosphate: step 3/3. The chain is Argininosuccinate lyase from Ehrlichia ruminantium (strain Welgevonden).